A 113-amino-acid chain; its full sequence is Iron-sulfur cluster insertion protein ErpA (113 aa).

3 residues coordinate iron-sulfur cluster: C41, C105, and C107.

Belongs to the HesB/IscA family. As to quaternary structure, homodimer. It depends on iron-sulfur cluster as a cofactor.

Functionally, required for insertion of 4Fe-4S clusters for at least IspG. The protein is Iron-sulfur cluster insertion protein ErpA of Vibrio vulnificus (strain YJ016).